A 766-amino-acid chain; its full sequence is Pyrophosphate-energized vacuolar membrane proton pump (766 aa).

Residues 2–8 (GAAILPD) are Intravacuolar-facing. The chain crosses the membrane as a helical span at residues 9–35 (LGTEILIPVCAVIGIAFALFQWLLVSK). Residues 36-84 (VKLSAVRDASPNAAAKNGYNDYLIEEEEGINDHNVVVKCAEIQNAISEG) are Cytoplasmic-facing. The chain crosses the membrane as a helical span at residues 85–114 (ATSFLFTEYKYVGIFMVAFAILIFLFLGSV). The Intravacuolar segment spans residues 115–135 (EGFSTSPQACSYDKTKTCKPA). The cysteines at positions 124 and 132 are disulfide-linked. A helical transmembrane segment spans residues 136–163 (LATAIFSTVSFLLGGVTSLVSGFLGMKI). Residues 164 to 186 (ATYANARTTLEARKGVGKAFITA) are Cytoplasmic-facing. Residues 187 to 216 (FRSGAVMGFLLAANGLLVLYIAINLFKIYY) form a helical membrane-spanning segment. Over 217–219 (GDD) the chain is Intravacuolar. A helical membrane pass occupies residues 220–248 (WGGLFEAITGYGLGGSSMALFGRVGGGIY). The Cytoplasmic segment spans residues 249-286 (TKAADVGADLVGKVERNIPEDDPRNPAVIADNVGDNVG). Lys-250 contacts substrate. Mg(2+) contacts are provided by Asp-253, Asp-257, and Asp-283. A helical membrane pass occupies residues 287–312 (DIAGMGSDLFGSYAESSCAALVVASI). The Intravacuolar portion of the chain corresponds to 313–320 (SSFGLNHE). The chain crosses the membrane as a helical span at residues 321–346 (LTAMLYPLIVSSVGILVCLLTTLFAT). Over 347 to 354 (DFFEIKAV) the chain is Cytoplasmic. A helical membrane pass occupies residues 355 to 382 (KEIEPALKKQLVISTVLMTIGVAVVSFV). The Intravacuolar segment spans residues 383–401 (ALPTSFTIFNFGVQKDVKS). The helical transmembrane segment at 402–425 (WQLFLCVAVGLWAGLIIGFVTEYY) threads the bilayer. The Cytoplasmic segment spans residues 426-447 (TSNAYSPVQDVADSCRTGAATN). A helical transmembrane segment spans residues 448-472 (VIFGLALGYKSVIIPIFAIAISIFV). Over 473–478 (SFTFAA) the chain is Intravacuolar. Residues 479-505 (MYGIAVAALGMLSTIATGLAIDAYGPI) form a helical membrane-spanning segment. At 506 to 534 (SDNAGGIAEMAGMSHRIRERTDALDAAGN) the chain is on the cytoplasmic side. Residues Asp-507 and Asn-534 each coordinate Mg(2+). A helical transmembrane segment spans residues 535-563 (TTAAIGKGFAIGSAALVSLALFGAFVSRA). Topologically, residues 564-573 (SITTVDVLTP) are intravacuolar. The helical transmembrane segment at 574–602 (KVFIGLIVGAMLPYWFSAMTMKSVGSAAL) threads the bilayer. At 603 to 631 (KMVEEVRRQFNTIPGLMEGTAKPDYATCV) the chain is on the cytoplasmic side. The chain crosses the membrane as a helical span at residues 632 to 660 (KISTDASIKEMIPPGALVMLTPLVVGILF). A topological domain (intravacuolar) is located at residue Gly-661. Residues 662–689 (VETLSGVLAGSLVSGVQIAISASNTGGA) form a helical membrane-spanning segment. Residues 690–732 (WDNAKKYIEAGASEHARSLGPKGSDCHKAAVIGDTIGDPLKDT) lie on the Cytoplasmic side of the membrane. Mg(2+) contacts are provided by Asp-691 and Asp-727. Lys-730 contacts substrate. The helical transmembrane segment at 733 to 758 (SGPSLNILIKLMAVESLVFAPFFATH) threads the bilayer. Residues 759 to 765 (GGLLFKI) lie on the Intravacuolar side of the membrane.

The protein belongs to the H(+)-translocating pyrophosphatase (TC 3.A.10) family. K(+)-stimulated subfamily. In terms of assembly, homodimer.

It localises to the vacuole membrane. It carries out the reaction diphosphate + H2O + H(+)(in) = 2 phosphate + 2 H(+)(out). Its activity is regulated as follows. Inhibited by excess pyrophosphate as well as excess Mg(2+). Inhibition by ATP, GTP, and CTP is reversed by increasing the Mg(2+) concentration. This suggests that the substrate is a particular metal complex such as MgPPi(2-). Modification of Asp-283 with DCCD abolishes pyrophosphatase activity. In terms of biological role, proton-translocating inorganic pyrophosphatase that contributes to the transtonoplast (from cytosol to vacuole lumen) H(+)-electrochemical potential difference. It establishes a proton gradient of similar and often greater magnitude than the H(+)-ATPase on the same membrane. This Vigna radiata var. radiata (Mung bean) protein is Pyrophosphate-energized vacuolar membrane proton pump.